We begin with the raw amino-acid sequence, 307 residues long: tRNA pseudouridine synthase B (307 aa).

The Nucleophile role is filled by aspartate 38.

It belongs to the pseudouridine synthase TruB family. Type 1 subfamily.

The enzyme catalyses uridine(55) in tRNA = pseudouridine(55) in tRNA. In terms of biological role, responsible for synthesis of pseudouridine from uracil-55 in the psi GC loop of transfer RNAs. This is tRNA pseudouridine synthase B from Bacillus cereus (strain ZK / E33L).